The chain runs to 385 residues: Circadian-associated transcriptional repressor (385 aa).

Positions 1–26 (MDSPSSVSSYSSYSLSSSFPTSPVNS) are enriched in low complexity. Disordered stretches follow at residues 1-108 (MDSP…SLNT), 203-233 (GGGK…EKMD), and 365-385 (GHRE…LLNL). Basic and acidic residues predominate over residues 33-45 (DSEREDKGAHGPR). Positions 70–79 (VSGNQHTPSH) are enriched in polar residues.

As to quaternary structure, interacts with PER2, CRY2, BHLHE41, HDAC1 and NR3C1. Interacts with BMAL1.

It localises to the nucleus. Its subcellular location is the PML body. Transcriptional repressor which forms a negative regulatory component of the circadian clock and acts independently of the circadian transcriptional repressors: CRY1, CRY2 and BHLHE41. In a histone deacetylase-dependent manner represses the transcriptional activator activity of the CLOCK-BMAL1 heterodimer. Abrogates the interaction of BMAL1 with the transcriptional coactivator CREBBP and can repress the histone acetyl-transferase activity of the CLOCK-BMAL1 heterodimer, reducing histone acetylation of its target genes. Rhythmically binds the E-box elements (5'-CACGTG-3') on circadian gene promoters and its occupancy shows circadian oscillation antiphasic to BMAL1. Interacts with the glucocorticoid receptor (NR3C1) and contributes to the repressive function in the glucocorticoid response. In Homo sapiens (Human), this protein is Circadian-associated transcriptional repressor (CIART).